The chain runs to 207 residues: MSETYVLKADLRTRVGKGSSRELRRNGQIPAVIYGDKQEPLAIAVSYKEIFYKIHGGGFKTTVATIEVDGKKIQVLPKDYQLDPVRDFPQHVDFLRVSAKSVVHVNVPVHFKNEEAAPGIKRGGVLNVVRHDVELIVPANAIPEALEIDLSGLEIGDSVHISAVKLPKGATPAIQDRDFTIATIAAPAGLKSEENAEGAAEEAKDGE.

The protein belongs to the bacterial ribosomal protein bL25 family. CTC subfamily. As to quaternary structure, part of the 50S ribosomal subunit; part of the 5S rRNA/L5/L18/L25 subcomplex. Contacts the 5S rRNA. Binds to the 5S rRNA independently of L5 and L18.

This is one of the proteins that binds to the 5S RNA in the ribosome where it forms part of the central protuberance. The sequence is that of Large ribosomal subunit protein bL25 from Brucella abortus (strain S19).